The chain runs to 127 residues: MPTIQQLIRDERSKAKRKTKSPALKQCPQRRGVCTRVYTTTPKKPNSALRKVARVRLTSGFEVTAYIPGIGHNLQEHSVVLIRGGRVKDLPGVRYHIIRGTLDATGVKNRQKARSKYGTKRPKPAAK.

Residues 1–28 (MPTIQQLIRDERSKAKRKTKSPALKQCP) form a disordered region. Position 89 is a 3-methylthioaspartic acid (aspartate 89). Residues 104 to 127 (ATGVKNRQKARSKYGTKRPKPAAK) are disordered. A compositionally biased stretch (basic residues) spans 109–127 (NRQKARSKYGTKRPKPAAK).

Belongs to the universal ribosomal protein uS12 family. As to quaternary structure, part of the 30S ribosomal subunit. Contacts proteins S8 and S17. May interact with IF1 in the 30S initiation complex.

With S4 and S5 plays an important role in translational accuracy. Functionally, interacts with and stabilizes bases of the 16S rRNA that are involved in tRNA selection in the A site and with the mRNA backbone. Located at the interface of the 30S and 50S subunits, it traverses the body of the 30S subunit contacting proteins on the other side and probably holding the rRNA structure together. The combined cluster of proteins S8, S12 and S17 appears to hold together the shoulder and platform of the 30S subunit. The polypeptide is Small ribosomal subunit protein uS12 (Microcystis aeruginosa (strain NIES-843 / IAM M-2473)).